Here is a 399-residue protein sequence, read N- to C-terminus: Elongation factor Tu (399 aa).

Positions 10–204 (KPHVNIGTIG…AVDASIPEPE (195 aa)) constitute a tr-type G domain. Residues 19–26 (GHVDHGKT) form a G1 region. 19 to 26 (GHVDHGKT) provides a ligand contact to GTP. Thr-26 serves as a coordination point for Mg(2+). A G2 region spans residues 60-64 (GITIN). The interval 81 to 84 (DCPG) is G3. GTP is bound by residues 81–85 (DCPGH) and 136–139 (NKCD). The interval 136–139 (NKCD) is G4. Positions 174-176 (SGL) are G5.

Belongs to the TRAFAC class translation factor GTPase superfamily. Classic translation factor GTPase family. EF-Tu/EF-1A subfamily. Monomer.

The protein localises to the cytoplasm. The catalysed reaction is GTP + H2O = GDP + phosphate + H(+). Its function is as follows. GTP hydrolase that promotes the GTP-dependent binding of aminoacyl-tRNA to the A-site of ribosomes during protein biosynthesis. The protein is Elongation factor Tu of Prochlorococcus marinus (strain MIT 9215).